A 253-amino-acid polypeptide reads, in one-letter code: Geranylgeranylglyceryl phosphate synthase (253 aa).

Mg(2+) contacts are provided by aspartate 28 and serine 53. Sn-glycerol 1-phosphate is bound by residues 172 to 178, 203 to 204, and 225 to 226; these read YLEAGSG, GG, and GN.

Belongs to the GGGP/HepGP synthase family. Group II subfamily. Mg(2+) serves as cofactor.

The protein localises to the cytoplasm. The catalysed reaction is sn-glycerol 1-phosphate + (2E,6E,10E)-geranylgeranyl diphosphate = sn-3-O-(geranylgeranyl)glycerol 1-phosphate + diphosphate. Its pathway is membrane lipid metabolism; glycerophospholipid metabolism. In terms of biological role, prenyltransferase that catalyzes the transfer of the geranylgeranyl moiety of geranylgeranyl diphosphate (GGPP) to the C3 hydroxyl of sn-glycerol-1-phosphate (G1P). This reaction is the first ether-bond-formation step in the biosynthesis of archaeal membrane lipids. The sequence is that of Geranylgeranylglyceryl phosphate synthase from Methanocaldococcus jannaschii (strain ATCC 43067 / DSM 2661 / JAL-1 / JCM 10045 / NBRC 100440) (Methanococcus jannaschii).